A 350-amino-acid chain; its full sequence is Phosphotriesterase-related protein (350 aa).

H22, H24, E169, H201, H230, and D298 together coordinate a divalent metal cation.

This sequence belongs to the metallo-dependent hydrolases superfamily. Phosphotriesterase family. It depends on a divalent metal cation as a cofactor.

The sequence is that of Phosphotriesterase-related protein from Drosophila melanogaster (Fruit fly).